The chain runs to 474 residues: MRFTFTSRCLALFLLLNHPTPILPAFSNQTYPTIEPKPFLYVVGRKKMMDAQYKCYDRMQQLPAYQGEGPYCNRTWDGWLCWDDTPAGVLSYQFCPDYFPDFDPSEKVTKYCDEKGVWFKHPENNRTWSNYTMCNAFTPEKLKNAYVLYYLAIVGHSLSIFTLVISLGIFVFFRSLGCQRVTLHKNMFLTYILNSMIIIIHLVEVVPNGELVRRDPVSCKILHFFHQYMMACNYFWMLCEGIYLHTLIVVAVFTEKQRLRWYYLLGWGFPLVPTTIHAITRAVYFNDNCWLSVETHLLYIIHGPVMAALVVNFFFLLNIVRVLVTKMRETHEAESHMYLKAVKATMILVPLLGIQFVVFPWRPSNKMLGKIYDYVMHSLIHFQGFFVATIYCFCNNEVQTTVKRQWAQFKIQWNQRWGRRPSNRSARAAAAAAEAGDIPIYICHQELRNEPANNQGEESAEIIPLNIIEQESSA.

The signal sequence occupies residues 1 to 24 (MRFTFTSRCLALFLLLNHPTPILP). Residues 25–146 (AFSNQTYPTI…FTPEKLKNAY (122 aa)) are Extracellular-facing. N-linked (GlcNAc...) asparagine glycosylation is found at N28, N73, N125, and N130. 3 cysteine pairs are disulfide-bonded: C55-C81, C72-C112, and C95-C134. A helical membrane pass occupies residues 147-169 (VLYYLAIVGHSLSIFTLVISLGI). The Cytoplasmic portion of the chain corresponds to 170–181 (FVFFRSLGCQRV). The chain crosses the membrane as a helical span at residues 182 to 202 (TLHKNMFLTYILNSMIIIIHL). Topologically, residues 203 to 219 (VEVVPNGELVRRDPVSC) are extracellular. An intrachain disulfide couples C219 to C289. Residues 220–242 (KILHFFHQYMMACNYFWMLCEGI) form a helical membrane-spanning segment. Over 243 to 259 (YLHTLIVVAVFTEKQRL) the chain is Cytoplasmic. A helical transmembrane segment spans residues 260 to 280 (RWYYLLGWGFPLVPTTIHAIT). Residues 281–296 (RAVYFNDNCWLSVETH) are Extracellular-facing. A helical transmembrane segment spans residues 297–320 (LLYIIHGPVMAALVVNFFFLLNIV). Over 321–340 (RVLVTKMRETHEAESHMYLK) the chain is Cytoplasmic. The helical transmembrane segment at 341–359 (AVKATMILVPLLGIQFVVF) threads the bilayer. Residues 360–367 (PWRPSNKM) are Extracellular-facing. Residues 368–394 (LGKIYDYVMHSLIHFQGFFVATIYCFC) traverse the membrane as a helical segment. Residues 395 to 474 (NNEVQTTVKR…LNIIEQESSA (80 aa)) lie on the Cytoplasmic side of the membrane.

It belongs to the G-protein coupled receptor 2 family. In terms of assembly, heterodimer of CALCR and RAMP1, RAMP2 or RAMP3; the receptor complexes function as AMYR1, AMYR2 and AMYR3 receptors, respectively, and respond to amylin/IAPP, calcitonin/CT and CGRP1 ligands. Interacts with GPRASP2.

Its subcellular location is the cell membrane. Its activity is regulated as follows. Sensitive to cholera toxin. G protein-coupled receptor activated by ligand peptides amylin (IAPP), calcitonin (CT/CALCA) and calcitonin gene-related peptide type 1 (CGRP1/CALCA). CALCR interacts with receptor-activity-modifying proteins RAMP1, 2 and 3 to form receptor complexes AMYR1, 2 and 3, respectively. IAPP, CT and CGRP1 activate CALCR and AMYRs with distinct modes of receptor activation resulting in specific phenotypes. Ligand binding causes a conformation change that triggers signaling via guanine nucleotide-binding proteins (G proteins) and modulates the activity of downstream effectors. Activates cAMP-dependent pathway. Its function is as follows. Non-functional protein. Unable to couple to G proteins and activate adenylyl cyclase. Does not undergo receptor internalization following ligand binding. This chain is Calcitonin receptor, found in Homo sapiens (Human).